The primary structure comprises 352 residues: UDP-3-O-acylglucosamine N-acyltransferase (352 aa).

Catalysis depends on H246, which acts as the Proton acceptor.

This sequence belongs to the transferase hexapeptide repeat family. LpxD subfamily. Homotrimer.

It catalyses the reaction a UDP-3-O-[(3R)-3-hydroxyacyl]-alpha-D-glucosamine + a (3R)-hydroxyacyl-[ACP] = a UDP-2-N,3-O-bis[(3R)-3-hydroxyacyl]-alpha-D-glucosamine + holo-[ACP] + H(+). It functions in the pathway bacterial outer membrane biogenesis; LPS lipid A biosynthesis. Functionally, catalyzes the N-acylation of UDP-3-O-acylglucosamine using 3-hydroxyacyl-ACP as the acyl donor. Is involved in the biosynthesis of lipid A, a phosphorylated glycolipid that anchors the lipopolysaccharide to the outer membrane of the cell. This Chlorobium luteolum (strain DSM 273 / BCRC 81028 / 2530) (Pelodictyon luteolum) protein is UDP-3-O-acylglucosamine N-acyltransferase.